Here is a 361-residue protein sequence, read N- to C-terminus: Phosphoserine aminotransferase (361 aa).

Residue arginine 42 coordinates L-glutamate. Residues 76-77 (AR), tryptophan 102, threonine 153, aspartate 173, and glutamine 196 contribute to the pyridoxal 5'-phosphate site. Lysine 197 carries the post-translational modification N6-(pyridoxal phosphate)lysine. 238 to 239 (NT) is a pyridoxal 5'-phosphate binding site.

It belongs to the class-V pyridoxal-phosphate-dependent aminotransferase family. SerC subfamily. As to quaternary structure, homodimer. The cofactor is pyridoxal 5'-phosphate.

It is found in the cytoplasm. The enzyme catalyses O-phospho-L-serine + 2-oxoglutarate = 3-phosphooxypyruvate + L-glutamate. It carries out the reaction 4-(phosphooxy)-L-threonine + 2-oxoglutarate = (R)-3-hydroxy-2-oxo-4-phosphooxybutanoate + L-glutamate. It functions in the pathway amino-acid biosynthesis; L-serine biosynthesis; L-serine from 3-phospho-D-glycerate: step 2/3. The protein operates within cofactor biosynthesis; pyridoxine 5'-phosphate biosynthesis; pyridoxine 5'-phosphate from D-erythrose 4-phosphate: step 3/5. Its function is as follows. Catalyzes the reversible conversion of 3-phosphohydroxypyruvate to phosphoserine and of 3-hydroxy-2-oxo-4-phosphonooxybutanoate to phosphohydroxythreonine. This Buchnera aphidicola subsp. Acyrthosiphon pisum (strain Tuc7) protein is Phosphoserine aminotransferase.